The following is a 480-amino-acid chain: ATP synthase subunit beta 1 (480 aa).

154-161 (GGAGVGKT) is a binding site for ATP.

This sequence belongs to the ATPase alpha/beta chains family. As to quaternary structure, F-type ATPases have 2 components, CF(1) - the catalytic core - and CF(0) - the membrane proton channel. CF(1) has five subunits: alpha(3), beta(3), gamma(1), delta(1), epsilon(1). CF(0) has four main subunits: a(1), b(1), b'(1) and c(9-12).

Its subcellular location is the cell inner membrane. It carries out the reaction ATP + H2O + 4 H(+)(in) = ADP + phosphate + 5 H(+)(out). Functionally, produces ATP from ADP in the presence of a proton gradient across the membrane. The catalytic sites are hosted primarily by the beta subunits. The chain is ATP synthase subunit beta 1 from Chlorobaculum tepidum (strain ATCC 49652 / DSM 12025 / NBRC 103806 / TLS) (Chlorobium tepidum).